We begin with the raw amino-acid sequence, 99 residues long: Phosphoribosyl-ATP pyrophosphatase (99 aa).

It belongs to the PRA-PH family.

Its subcellular location is the cytoplasm. It carries out the reaction 1-(5-phospho-beta-D-ribosyl)-ATP + H2O = 1-(5-phospho-beta-D-ribosyl)-5'-AMP + diphosphate + H(+). It participates in amino-acid biosynthesis; L-histidine biosynthesis; L-histidine from 5-phospho-alpha-D-ribose 1-diphosphate: step 2/9. The protein is Phosphoribosyl-ATP pyrophosphatase of Methanococcoides burtonii (strain DSM 6242 / NBRC 107633 / OCM 468 / ACE-M).